A 143-amino-acid chain; its full sequence is Transcriptional regulator MraZ (143 aa).

SpoVT-AbrB domains lie at 5–47 and 76–119; these read EYQH…PQEE and ASEC…SKSE.

It belongs to the MraZ family. As to quaternary structure, forms oligomers.

The protein localises to the cytoplasm. It is found in the nucleoid. The polypeptide is Transcriptional regulator MraZ (Listeria monocytogenes serotype 4b (strain CLIP80459)).